The primary structure comprises 422 residues: L-cysteine:1D-myo-inositol 2-amino-2-deoxy-alpha-D-glucopyranoside ligase (422 aa).

Residue Cys-43 coordinates Zn(2+). L-cysteinyl-5'-AMP is bound by residues 43–46 (CGIT), Thr-58, and 81–83 (NVT). The short motif at 45–55 (ITPYDATHLGH) is the 'HIGH' region element. Residues 185–200 (AERGGDPDRPGKRNRL) show a composition bias toward basic and acidic residues. The disordered stretch occupies residues 185-221 (AERGGDPDRPGKRNRLDPMLWRGRRPGEPSWPGPRGV). The 'ERGGDP' region signature appears at 186–191 (ERGGDP). L-cysteinyl-5'-AMP is bound at residue Trp-227. Cys-231 lines the Zn(2+) pocket. An L-cysteinyl-5'-AMP-binding site is contributed by 249–251 (GSD). Residue His-256 participates in Zn(2+) binding. An L-cysteinyl-5'-AMP-binding site is contributed by Ile-288. The short motif at 294 to 298 (KMSKS) is the 'KMSKS' region element.

This sequence belongs to the class-I aminoacyl-tRNA synthetase family. MshC subfamily. Monomer. It depends on Zn(2+) as a cofactor.

The enzyme catalyses 1D-myo-inositol 2-amino-2-deoxy-alpha-D-glucopyranoside + L-cysteine + ATP = 1D-myo-inositol 2-(L-cysteinylamino)-2-deoxy-alpha-D-glucopyranoside + AMP + diphosphate + H(+). Its function is as follows. Catalyzes the ATP-dependent condensation of GlcN-Ins and L-cysteine to form L-Cys-GlcN-Ins. In Geodermatophilus obscurus (strain ATCC 25078 / DSM 43160 / JCM 3152 / CCUG 61914 / KCC A-0152 / KCTC 9177 / NBRC 13315 / NRRL B-3577 / G-20), this protein is L-cysteine:1D-myo-inositol 2-amino-2-deoxy-alpha-D-glucopyranoside ligase.